The sequence spans 324 residues: Ribose 1,5-bisphosphate isomerase (324 aa).

Residues 22–25 (RGAG) and arginine 65 contribute to the substrate site. The active-site Proton acceptor is cysteine 135. Substrate is bound at residue 137 to 139 (SKA). Aspartate 204 acts as the Proton donor in catalysis. Lysine 240 contributes to the substrate binding site.

Belongs to the eIF-2B alpha/beta/delta subunits family. R15P isomerase subfamily.

The enzyme catalyses alpha-D-ribose 1,5-bisphosphate = D-ribulose 1,5-bisphosphate. Catalyzes the isomerization of ribose 1,5-bisphosphate (R15P) to ribulose 1,5-bisphosphate (RuBP), the CO(2) acceptor and substrate for RubisCO. Functions in an archaeal AMP degradation pathway, together with AMP phosphorylase and RubisCO. This chain is Ribose 1,5-bisphosphate isomerase, found in Pyrococcus furiosus (strain ATCC 43587 / DSM 3638 / JCM 8422 / Vc1).